Reading from the N-terminus, the 166-residue chain is NADH-quinone oxidoreductase subunit A (166 aa).

The next 3 helical transmembrane spans lie at 16 to 36 (FAVF…GAYF), 68 to 88 (FYLV…LYAW), and 98 to 118 (IGFI…FYLV). Residues 141-166 (RYASSHPQDISQELSVAGSQQANESR) are disordered.

This sequence belongs to the complex I subunit 3 family. As to quaternary structure, NDH-1 is composed of 13 different subunits. Subunits NuoA, H, J, K, L, M, N constitute the membrane sector of the complex.

It is found in the cell inner membrane. The catalysed reaction is a quinone + NADH + 5 H(+)(in) = a quinol + NAD(+) + 4 H(+)(out). NDH-1 shuttles electrons from NADH, via FMN and iron-sulfur (Fe-S) centers, to quinones in the respiratory chain. The immediate electron acceptor for the enzyme in this species is believed to be ubiquinone. Couples the redox reaction to proton translocation (for every two electrons transferred, four hydrogen ions are translocated across the cytoplasmic membrane), and thus conserves the redox energy in a proton gradient. In Yersinia pseudotuberculosis serotype O:1b (strain IP 31758), this protein is NADH-quinone oxidoreductase subunit A.